Reading from the N-terminus, the 202-residue chain is Complement component C8 gamma chain (202 aa).

An N-terminal signal peptide occupies residues M1 to A23. Cysteines 96 and 188 form a disulfide. N173 carries N-linked (GlcNAc...) asparagine glycosylation.

It belongs to the calycin superfamily. Lipocalin family. In terms of assembly, heterotrimer of 3 chains: alpha (C8A), beta (C8B) and gamma (C8G); the alpha and gamma chains are disulfide bonded. Component of the membrane attack complex (MAC), composed of complement C5b, C6, C7, C8A, C8B, C8G and multiple copies of the pore-forming subunit C9.

It is found in the secreted. Its subcellular location is the target cell membrane. With respect to regulation, membrane attack complex (MAC) assembly is inhibited by CD59, thereby protecting self-cells from damage during complement activation. MAC assembly is also inhibited by clusterin (CLU) chaperones that inhibit polymerization of C9. Functionally, component of the membrane attack complex (MAC), a multiprotein complex activated by the complement cascade, which inserts into a target cell membrane and forms a pore, leading to target cell membrane rupture and cell lysis. The MAC is initiated by proteolytic cleavage of C5 into complement C5b in response to the classical, alternative, lectin and GZMK complement pathways. The complement pathways consist in a cascade of proteins that leads to phagocytosis and breakdown of pathogens and signaling that strengthens the adaptive immune system. C8G, together with C8A and C8B, inserts into the target membrane, but does not form pores by itself. During MAC assembly, associates with C5b, C6 and C7 to form the C5b8 intermediate complex that inserts into the target membrane and traverses the bilayer increasing membrane rigidity. The chain is Complement component C8 gamma chain (C8G) from Oryctolagus cuniculus (Rabbit).